We begin with the raw amino-acid sequence, 40 residues long: Proteinase inhibitor IIB (40 aa).

3 disulfides stabilise this stretch: cysteine 2-cysteine 16, cysteine 6-cysteine 28, and cysteine 12-cysteine 38.

This sequence belongs to the protease inhibitor I20 (potato type II proteinase inhibitor) family.

It is found in the secreted. Functionally, inhibits chymotrypsin and subtilisin strongly. In Solanum tuberosum (Potato), this protein is Proteinase inhibitor IIB.